A 447-amino-acid polypeptide reads, in one-letter code: Cysteine--tRNA ligase (447 aa).

Residue Cys-28 participates in Zn(2+) binding. Residues 30–40 carry the 'HIGH' region motif; the sequence is PTVYNYIHIGN. Residues Cys-211, His-236, and Glu-240 each coordinate Zn(2+). The short motif at 268 to 272 is the 'KMSKS' region element; the sequence is KMSKS. ATP is bound at residue Lys-271.

It belongs to the class-I aminoacyl-tRNA synthetase family. Monomer. Zn(2+) is required as a cofactor.

It localises to the cytoplasm. The enzyme catalyses tRNA(Cys) + L-cysteine + ATP = L-cysteinyl-tRNA(Cys) + AMP + diphosphate. The polypeptide is Cysteine--tRNA ligase (Streptococcus pyogenes serotype M6 (strain ATCC BAA-946 / MGAS10394)).